The primary structure comprises 340 residues: Ketol-acid reductoisomerase (NADP(+)) (340 aa).

Residues 3 to 183 form the KARI N-terminal Rossmann domain; it reads LPIYYDKDCD…GGGRTGIIHT (181 aa). Residues 26–29, Ser54, and 84–87 each bind NADP(+); these read FGSQ and DEIQ. Residue His109 is part of the active site. Gly135 contacts NADP(+). One can recognise a KARI C-terminal knotted domain in the interval 184–329; sequence TFKDETETDL…KRLRAMMPWI (146 aa). Mg(2+) contacts are provided by Asp192, Glu196, Glu228, and Glu232. Ser253 is a binding site for substrate.

Belongs to the ketol-acid reductoisomerase family. It depends on Mg(2+) as a cofactor.

It catalyses the reaction (2R)-2,3-dihydroxy-3-methylbutanoate + NADP(+) = (2S)-2-acetolactate + NADPH + H(+). The catalysed reaction is (2R,3R)-2,3-dihydroxy-3-methylpentanoate + NADP(+) = (S)-2-ethyl-2-hydroxy-3-oxobutanoate + NADPH + H(+). It functions in the pathway amino-acid biosynthesis; L-isoleucine biosynthesis; L-isoleucine from 2-oxobutanoate: step 2/4. The protein operates within amino-acid biosynthesis; L-valine biosynthesis; L-valine from pyruvate: step 2/4. Its function is as follows. Involved in the biosynthesis of branched-chain amino acids (BCAA). Catalyzes an alkyl-migration followed by a ketol-acid reduction of (S)-2-acetolactate (S2AL) to yield (R)-2,3-dihydroxy-isovalerate. In the isomerase reaction, S2AL is rearranged via a Mg-dependent methyl migration to produce 3-hydroxy-3-methyl-2-ketobutyrate (HMKB). In the reductase reaction, this 2-ketoacid undergoes a metal-dependent reduction by NADPH to yield (R)-2,3-dihydroxy-isovalerate. The sequence is that of Ketol-acid reductoisomerase (NADP(+)) from Nitratiruptor sp. (strain SB155-2).